The primary structure comprises 757 residues: Catalase-peroxidase 2 (757 aa).

The signal sequence occupies residues Met-1–Ala-26. Positions Trp-126–Tyr-248 form a cross-link, tryptophyl-tyrosyl-methioninium (Trp-Tyr) (with M-274). His-127 functions as the Proton acceptor in the catalytic mechanism. Positions Tyr-248–Met-274 form a cross-link, tryptophyl-tyrosyl-methioninium (Tyr-Met) (with W-126). His-289 contributes to the heme b binding site.

It belongs to the peroxidase family. Peroxidase/catalase subfamily. In terms of assembly, homodimer or homotetramer. Requires heme b as cofactor. In terms of processing, formation of the three residue Trp-Tyr-Met cross-link is important for the catalase, but not the peroxidase activity of the enzyme.

The enzyme catalyses H2O2 + AH2 = A + 2 H2O. The catalysed reaction is 2 H2O2 = O2 + 2 H2O. Its function is as follows. Bifunctional enzyme with both catalase and broad-spectrum peroxidase activity. This Shewanella frigidimarina (strain NCIMB 400) protein is Catalase-peroxidase 2.